The primary structure comprises 132 residues: Cytidine deaminase (132 aa).

A CMP/dCMP-type deaminase domain is found at 1–128 (MDRQMLIKEA…ELLPGAFTAE (128 aa)). A substrate-binding site is contributed by 42–44 (NIE). C53 is a Zn(2+) binding site. E55 serves as the catalytic Proton donor. Positions 86 and 89 each coordinate Zn(2+).

It belongs to the cytidine and deoxycytidylate deaminase family. It depends on Zn(2+) as a cofactor.

The enzyme catalyses cytidine + H2O + H(+) = uridine + NH4(+). The catalysed reaction is 2'-deoxycytidine + H2O + H(+) = 2'-deoxyuridine + NH4(+). Its function is as follows. This enzyme scavenges exogenous and endogenous cytidine and 2'-deoxycytidine for UMP synthesis. The sequence is that of Cytidine deaminase (cdd) from Halalkalibacterium halodurans (strain ATCC BAA-125 / DSM 18197 / FERM 7344 / JCM 9153 / C-125) (Bacillus halodurans).